A 430-amino-acid polypeptide reads, in one-letter code: Phosphomethylpyrimidine synthase (430 aa).

Substrate contacts are provided by residues asparagine 67, methionine 96, tyrosine 125, histidine 161, serine 183 to glycine 185, aspartate 224 to arginine 227, and glutamate 263. Histidine 267 contributes to the Zn(2+) binding site. Tyrosine 290 is a substrate binding site. Residue histidine 331 coordinates Zn(2+). [4Fe-4S] cluster contacts are provided by cysteine 406, cysteine 409, and cysteine 413.

It belongs to the ThiC family. As to quaternary structure, homodimer. [4Fe-4S] cluster is required as a cofactor.

The enzyme catalyses 5-amino-1-(5-phospho-beta-D-ribosyl)imidazole + S-adenosyl-L-methionine = 4-amino-2-methyl-5-(phosphooxymethyl)pyrimidine + CO + 5'-deoxyadenosine + formate + L-methionine + 3 H(+). Its pathway is cofactor biosynthesis; thiamine diphosphate biosynthesis. Its function is as follows. Catalyzes the synthesis of the hydroxymethylpyrimidine phosphate (HMP-P) moiety of thiamine from aminoimidazole ribotide (AIR) in a radical S-adenosyl-L-methionine (SAM)-dependent reaction. The protein is Phosphomethylpyrimidine synthase of Campylobacter jejuni subsp. jejuni serotype O:23/36 (strain 81-176).